The following is a 247-amino-acid chain: Probable transcriptional regulatory protein GSU1074 (247 aa).

Belongs to the TACO1 family.

Its subcellular location is the cytoplasm. The chain is Probable transcriptional regulatory protein GSU1074 from Geobacter sulfurreducens (strain ATCC 51573 / DSM 12127 / PCA).